The chain runs to 483 residues: Beta-glucosidase 4 (483 aa).

A beta-D-glucoside contacts are provided by residues glutamine 29, histidine 131, 176-177, tyrosine 310, and glutamate 380; that span reads NE. The Proton donor role is filled by glutamate 177. The Nucleophile role is filled by glutamate 380. Asparagine 398 is a glycosylation site (N-linked (GlcNAc...) asparagine). A beta-D-glucoside contacts are provided by residues tryptophan 429, 436–437, and phenylalanine 445; that span reads EW.

The protein belongs to the glycosyl hydrolase 1 family.

The enzyme catalyses Hydrolysis of terminal, non-reducing beta-D-glucosyl residues with release of beta-D-glucose.. This chain is Beta-glucosidase 4 (BGLU4), found in Oryza sativa subsp. japonica (Rice).